A 109-amino-acid polypeptide reads, in one-letter code: Nucleoid-associated protein Sbal223_1770 (109 aa).

This sequence belongs to the YbaB/EbfC family. In terms of assembly, homodimer.

It localises to the cytoplasm. The protein resides in the nucleoid. Binds to DNA and alters its conformation. May be involved in regulation of gene expression, nucleoid organization and DNA protection. The polypeptide is Nucleoid-associated protein Sbal223_1770 (Shewanella baltica (strain OS223)).